The following is a 254-amino-acid chain: Glucosamine-6-phosphate deaminase (254 aa).

The Proton acceptor; for enolization step role is filled by aspartate 63. Asparagine 129 acts as the For ring-opening step in catalysis. Catalysis depends on histidine 131, which acts as the Proton acceptor; for ring-opening step. Catalysis depends on glutamate 136, which acts as the For ring-opening step.

This sequence belongs to the glucosamine/galactosamine-6-phosphate isomerase family. NagB subfamily.

It catalyses the reaction alpha-D-glucosamine 6-phosphate + H2O = beta-D-fructose 6-phosphate + NH4(+). Its pathway is amino-sugar metabolism; N-acetylneuraminate degradation; D-fructose 6-phosphate from N-acetylneuraminate: step 5/5. Catalyzes the reversible isomerization-deamination of glucosamine 6-phosphate (GlcN6P) to form fructose 6-phosphate (Fru6P) and ammonium ion. This is Glucosamine-6-phosphate deaminase from Exiguobacterium sp. (strain ATCC BAA-1283 / AT1b).